A 308-amino-acid chain; its full sequence is ABC transporter protein AbcA (308 aa).

The 240-residue stretch at Leu-6–Asp-245 folds into the ABC transporter domain. Gly-58–Ser-65 lines the ATP pocket.

The protein belongs to the ABC transporter superfamily.

Functionally, influences the expression of the surface array protein gene (vapA). May have both regulatory and transport activities. The chain is ABC transporter protein AbcA (abcA) from Aeromonas salmonicida.